The following is a 492-amino-acid chain: Membrane-bound lytic murein transglycosylase F (492 aa).

The N-terminal stretch at 1–18 (MKGLFLRIIAIVALLLWA) is a signal peptide. Residues 19 to 268 (IDMVFPWQQI…RIEEKYFNHL (250 aa)) are non-LT domain. An LT domain region spans residues 270–492 (QFDYVDTRSY…DTLATTVTTQ (223 aa)). E313 is an active-site residue.

The protein in the N-terminal section; belongs to the bacterial solute-binding protein 3 family. It in the C-terminal section; belongs to the transglycosylase Slt family.

Its subcellular location is the cell outer membrane. The enzyme catalyses Exolytic cleavage of the (1-&gt;4)-beta-glycosidic linkage between N-acetylmuramic acid (MurNAc) and N-acetylglucosamine (GlcNAc) residues in peptidoglycan, from either the reducing or the non-reducing ends of the peptidoglycan chains, with concomitant formation of a 1,6-anhydrobond in the MurNAc residue.. Murein-degrading enzyme that degrades murein glycan strands and insoluble, high-molecular weight murein sacculi, with the concomitant formation of a 1,6-anhydromuramoyl product. Lytic transglycosylases (LTs) play an integral role in the metabolism of the peptidoglycan (PG) sacculus. Their lytic action creates space within the PG sacculus to allow for its expansion as well as for the insertion of various structures such as secretion systems and flagella. The protein is Membrane-bound lytic murein transglycosylase F of Pasteurella multocida (strain Pm70).